The sequence spans 75 residues: DNA-directed RNA polymerase subunit omega (75 aa).

Belongs to the RNA polymerase subunit omega family. In cyanobacteria the RNAP catalytic core is composed of 2 alpha, 1 beta, 1 beta', 1 gamma and 1 omega subunit. When a sigma factor is associated with the core the holoenzyme is formed, which can initiate transcription.

The enzyme catalyses RNA(n) + a ribonucleoside 5'-triphosphate = RNA(n+1) + diphosphate. Its function is as follows. Promotes RNA polymerase assembly. Latches the N- and C-terminal regions of the beta' subunit thereby facilitating its interaction with the beta and alpha subunits. In Synechococcus sp. (strain CC9311), this protein is DNA-directed RNA polymerase subunit omega.